We begin with the raw amino-acid sequence, 150 residues long: Large ribosomal subunit protein bL9 (150 aa).

It belongs to the bacterial ribosomal protein bL9 family.

Functionally, binds to the 23S rRNA. This Lactococcus lactis subsp. cremoris (strain SK11) protein is Large ribosomal subunit protein bL9.